We begin with the raw amino-acid sequence, 588 residues long: Protein kintoun (588 aa).

Disordered regions lie at residues 199-223, 338-498, and 510-535; these read PGYEAKEPPEERDLSPSTSHLPENS, PPLE…SSQE, and AANVNASDETSKRKPTEEQLEDADED. Residues 202 to 212 are compositionally biased toward basic and acidic residues; it reads EAKEPPEERDL. The segment covering 350–361 has biased composition (polar residues); it reads PNPTSDPQNENQ. Composition is skewed to basic and acidic residues over residues 362 to 382 and 393 to 433; these read TRVEERVEEMAEKGGEQHQRG and QVLE…KFEL. Over residues 435–447 the composition is skewed to polar residues; that stretch reads DVQQENKGNCSNT. Residues 448–460 show a composition bias toward basic and acidic residues; the sequence is KEVKCCRRTKDSL.

The protein belongs to the PIH1 family. Kintoun subfamily.

It localises to the cytoplasm. It is found in the dynein axonemal particle. In terms of biological role, required for cytoplasmic pre-assembly of axonemal dyneins, thereby playing a central role in motility in cilia and flagella. Involved in pre-assembly of dynein arm complexes in the cytoplasm before intraflagellar transport loads them for the ciliary compartment. The chain is Protein kintoun from Oryzias latipes (Japanese rice fish).